The primary structure comprises 603 residues: Extracellular basic protease (603 aa).

The signal sequence occupies residues 1-21; that stretch reads MNLSNISAVKVLTLVVSAAIA. The propeptide occupies 22-132; sequence GQVCAAESIV…VEVDRLAYPK (111 aa). A Peptidase S8 domain is found at 143 to 468; the sequence is QWHYFGNYGV…SGIVDANAAV (326 aa). Asp-173 acts as the Charge relay system in catalysis. The tract at residues 197 to 221 is disordered; that stretch reads PNARDGDQRDNNPADEGDWFDNWDC. Cystine bridges form between Cys-221-Cys-273 and Cys-315-Cys-352. His-237 serves as the catalytic Charge relay system. Ser-409 acts as the Charge relay system in catalysis. Residues 477 to 603 constitute a propeptide that is removed on maturation; the sequence is RAQPRPPVNQ…GSIDSWSLTF (127 aa). The region spanning 478 to 603 is the P/Homo B domain; it reads AQPRPPVNQP…GSIDSWSLTF (126 aa).

It belongs to the peptidase S8 family.

The protein localises to the secreted. The chain is Extracellular basic protease (bprV) from Dichelobacter nodosus (Bacteroides nodosus).